The chain runs to 130 residues: Small ribosomal subunit protein uS9 (130 aa).

Belongs to the universal ribosomal protein uS9 family.

This chain is Small ribosomal subunit protein uS9, found in Carboxydothermus hydrogenoformans (strain ATCC BAA-161 / DSM 6008 / Z-2901).